We begin with the raw amino-acid sequence, 434 residues long: Serine hydroxymethyltransferase (434 aa).

Residues Leu-133 and 137-139 (GHL) each bind (6S)-5,6,7,8-tetrahydrofolate. Lys-242 is modified (N6-(pyridoxal phosphate)lysine). 366-368 (SPF) contributes to the (6S)-5,6,7,8-tetrahydrofolate binding site.

Belongs to the SHMT family. In terms of assembly, homodimer. The cofactor is pyridoxal 5'-phosphate.

The protein localises to the cytoplasm. It catalyses the reaction (6R)-5,10-methylene-5,6,7,8-tetrahydrofolate + glycine + H2O = (6S)-5,6,7,8-tetrahydrofolate + L-serine. It participates in one-carbon metabolism; tetrahydrofolate interconversion. Its pathway is amino-acid biosynthesis; glycine biosynthesis; glycine from L-serine: step 1/1. Its function is as follows. Catalyzes the reversible interconversion of serine and glycine with tetrahydrofolate (THF) serving as the one-carbon carrier. This reaction serves as the major source of one-carbon groups required for the biosynthesis of purines, thymidylate, methionine, and other important biomolecules. Also exhibits THF-independent aldolase activity toward beta-hydroxyamino acids, producing glycine and aldehydes, via a retro-aldol mechanism. In Erythrobacter litoralis (strain HTCC2594), this protein is Serine hydroxymethyltransferase.